Reading from the N-terminus, the 206-residue chain is Elongation factor 1-beta (206 aa).

A2 carries the N-acetylalanine modification. K13 participates in a covalent cross-link: Glycyl lysine isopeptide (Lys-Gly) (interchain with G-Cter in ubiquitin). 2 positions are modified to phosphoserine: S31 and S86.

Belongs to the EF-1-beta/EF-1-delta family. In terms of assembly, the eukaryotic elongation factor 1 complex (eEF1) is probably a heterohexamer. Two trimeric complexes, each composed of eEF1A (TEF1 or TEF2), eEF1Balpha (EFB1) and eEF1Bgamma (CAM1 or TEF4), are probably dimerized via the eF1Bgamma subunits. eEF1Balpha interacts directly with eEF1A. eEF1Balpha and eEF1Bgamma form the eEF1B subcomplex with the GEF activity. Post-translationally, S-thiolated in response to oxidative stress, probably inhibiting the protein and causing a reduction in protein synthesis.

It functions in the pathway protein biosynthesis; polypeptide chain elongation. Functionally, catalytic subunit of the guanine nucleotide exchange factor (GEF) (eEF1B subcomplex) of the eukaryotic elongation factor 1 complex (eEF1). Stimulates the exchange of GDP for GTP on elongation factor 1A (eEF1A), probably by displacing GDP from the nucleotide binding pocket in eEF1A. The 30-fold higher concentration of GTP compared to GDP in cells favors the formation of eEF1A-GTP, which rapidly forms a ternary complex with aminoacyl-tRNA that in turn displaces eEF1B from the complex. The sequence is that of Elongation factor 1-beta (EFB1) from Saccharomyces cerevisiae (strain ATCC 204508 / S288c) (Baker's yeast).